A 48-amino-acid polypeptide reads, in one-letter code: Disintegrin leucogastin-A (48 aa).

One can recognise a Disintegrin domain in the interval 1–47 (DCASGPCCRDCKFLEEFTICNMARGDDMNDYCNGKTCDCPRNPHKWP). 4 disulfides stabilise this stretch: Cys-2–Cys-11, Cys-7–Cys-32, Cys-8–Cys-37, and Cys-20–Cys-39. Positions 24 to 26 (RGD) match the Cell attachment site motif.

This sequence belongs to the venom metalloproteinase (M12B) family. P-II subfamily. P-IIa sub-subfamily. In terms of assembly, monomer (disintegrin). In terms of tissue distribution, expressed by the venom gland.

It localises to the secreted. In terms of biological role, inhibits ADP-induced human platelet aggregation. This Echis leucogaster (Roman's saw-scaled viper) protein is Disintegrin leucogastin-A.